Here is a 220-residue protein sequence, read N- to C-terminus: 7-cyano-7-deazaguanine synthase (220 aa).

Position 7-17 (I7–A17) interacts with ATP. 4 residues coordinate Zn(2+): C187, C195, C198, and C201.

The protein belongs to the QueC family. Zn(2+) serves as cofactor.

The catalysed reaction is 7-carboxy-7-deazaguanine + NH4(+) + ATP = 7-cyano-7-deazaguanine + ADP + phosphate + H2O + H(+). Its pathway is purine metabolism; 7-cyano-7-deazaguanine biosynthesis. Catalyzes the ATP-dependent conversion of 7-carboxy-7-deazaguanine (CDG) to 7-cyano-7-deazaguanine (preQ(0)). The protein is 7-cyano-7-deazaguanine synthase of Campylobacter hominis (strain ATCC BAA-381 / DSM 21671 / CCUG 45161 / LMG 19568 / NCTC 13146 / CH001A).